The primary structure comprises 723 residues: Polyribonucleotide nucleotidyltransferase (723 aa).

2 residues coordinate Mg(2+): aspartate 488 and aspartate 494. Positions 555–614 (PKIITLNIKPEKIKDVIGPGGKQINAIIEETGVKIDIEQDGTVYIASQDQAMNRKAIAII) constitute a KH domain. The 69-residue stretch at 624-692 (GEVYTGKVRR…HQGRVNLSRK (69 aa)) folds into the S1 motif domain. Residues 692–723 (KALLEKKEQPEGDKKPQAEKKFYPKTKKPESK) form a disordered region. Over residues 693-723 (ALLEKKEQPEGDKKPQAEKKFYPKTKKPESK) the composition is skewed to basic and acidic residues.

Belongs to the polyribonucleotide nucleotidyltransferase family. It depends on Mg(2+) as a cofactor.

It is found in the cytoplasm. It catalyses the reaction RNA(n+1) + phosphate = RNA(n) + a ribonucleoside 5'-diphosphate. In terms of biological role, involved in mRNA degradation. Catalyzes the phosphorolysis of single-stranded polyribonucleotides processively in the 3'- to 5'-direction. In Listeria innocua serovar 6a (strain ATCC BAA-680 / CLIP 11262), this protein is Polyribonucleotide nucleotidyltransferase.